A 433-amino-acid polypeptide reads, in one-letter code: Enolase (433 aa).

Gln-167 contacts (2R)-2-phosphoglycerate. The active-site Proton donor is the Glu-209. Residues Asp-246, Glu-291, and Asp-318 each coordinate Mg(2+). Lys-343, Arg-372, Ser-373, and Lys-394 together coordinate (2R)-2-phosphoglycerate. The active-site Proton acceptor is Lys-343.

Belongs to the enolase family. In terms of assembly, component of the RNA degradosome, a multiprotein complex involved in RNA processing and mRNA degradation. Requires Mg(2+) as cofactor.

The protein resides in the cytoplasm. Its subcellular location is the secreted. It is found in the cell surface. It catalyses the reaction (2R)-2-phosphoglycerate = phosphoenolpyruvate + H2O. The protein operates within carbohydrate degradation; glycolysis; pyruvate from D-glyceraldehyde 3-phosphate: step 4/5. Catalyzes the reversible conversion of 2-phosphoglycerate (2-PG) into phosphoenolpyruvate (PEP). It is essential for the degradation of carbohydrates via glycolysis. This Photorhabdus laumondii subsp. laumondii (strain DSM 15139 / CIP 105565 / TT01) (Photorhabdus luminescens subsp. laumondii) protein is Enolase.